We begin with the raw amino-acid sequence, 145 residues long: Small ribosomal subunit protein uS19 (145 aa).

Ala2 carries the N-acetylalanine modification. A Glycyl lysine isopeptide (Lys-Gly) (interchain with G-Cter in SUMO2) cross-link involves residue Lys108.

It belongs to the universal ribosomal protein uS19 family. As to quaternary structure, component of the small ribosomal subunit.

The protein localises to the cytoplasm. Functionally, component of the small ribosomal subunit. The ribosome is a large ribonucleoprotein complex responsible for the synthesis of proteins in the cell. This Bos taurus (Bovine) protein is Small ribosomal subunit protein uS19 (RPS15).